The chain runs to 422 residues: S-adenosylmethionine synthase (422 aa).

His16 provides a ligand contact to ATP. Mg(2+) is bound at residue Asp18. Glu44 contacts K(+). L-methionine is bound by residues Glu57 and Gln100. The tract at residues 100 to 110 (QSPDISQGVSA) is flexible loop. Residues 175–177 (DGK), 251–252 (KF), Asp260, 266–267 (RK), Ala283, and Lys287 contribute to the ATP site. Asp260 provides a ligand contact to L-methionine. L-methionine is bound at residue Lys291.

Belongs to the AdoMet synthase family. As to quaternary structure, homotetramer; dimer of dimers. Mg(2+) serves as cofactor. The cofactor is K(+).

It is found in the cytoplasm. The catalysed reaction is L-methionine + ATP + H2O = S-adenosyl-L-methionine + phosphate + diphosphate. It functions in the pathway amino-acid biosynthesis; S-adenosyl-L-methionine biosynthesis; S-adenosyl-L-methionine from L-methionine: step 1/1. In terms of biological role, catalyzes the formation of S-adenosylmethionine (AdoMet) from methionine and ATP. The overall synthetic reaction is composed of two sequential steps, AdoMet formation and the subsequent tripolyphosphate hydrolysis which occurs prior to release of AdoMet from the enzyme. This Rippkaea orientalis (strain PCC 8801 / RF-1) (Cyanothece sp. (strain PCC 8801)) protein is S-adenosylmethionine synthase.